The primary structure comprises 168 residues: Cilia- and flagella-associated protein 276 (168 aa).

Disordered regions lie at residues 35–61 (AHLA…RDTF) and 149–168 (HTAA…FFST). The span at 38–55 (AQQQDPWSRLSSTPTATS) shows a compositional bias: polar residues.

In terms of assembly, microtubule inner protein component of sperm flagellar doublet microtubules. As to expression, predominantly expressed in nervous system tissues, such as the spinal cord, cerebrum, cerebellum, and sciatic nerve.

It localises to the cytoplasm. Its subcellular location is the cytoskeleton. It is found in the cilium axoneme. The protein resides in the flagellum axoneme. Microtubule inner protein (MIP) part of the dynein-decorated doublet microtubules (DMTs) in cilia axoneme, which is required for motile cilia beating. May play an important role for the maintenance of myelin-axon integrity. May affect intracellular Ca(2+) homeostasis. The protein is Cilia- and flagella-associated protein 276 of Mus musculus (Mouse).